Reading from the N-terminus, the 231-residue chain is 3-oxoadipate CoA-transferase subunit A (231 aa).

25–31 (GGFGTAG) contacts CoA.

It belongs to the 3-oxoacid CoA-transferase subunit A family. Heterodimer.

The enzyme catalyses 3-oxoadipate + succinyl-CoA = 3-oxoadipyl-CoA + succinate. It participates in aromatic compound metabolism; beta-ketoadipate pathway; acetyl-CoA and succinyl-CoA from 3-oxoadipate: step 1/2. The sequence is that of 3-oxoadipate CoA-transferase subunit A (pcaI) from Pseudomonas putida (Arthrobacter siderocapsulatus).